Reading from the N-terminus, the 731-residue chain is MEELIVELRLFLELLDHEYLTSTVREKKAVLTNILLRLQSSKGFEVKDHAQKAEANNLPAPPQMPLPEIPQPWLPPDSGPPPLPTSSLPEGYYEEAVPLSPGKAPEYITSNYDSDAMSSSYESYDEEEEDGKGKKTRHQWPSEEASMDLVKDAKICAFLLRKKRFGQWTKLLCVIKDTKLLCYKSSKDQQPQMELPLQGCSITYIPRDSKKKKHELKITQQGTDPLVLAVQSKEQAEQWLKVIKEAYSGCSGPVDPECSPPPSTSAPVNKAELEKKLSSERPSSDGEGGVENGVTTCNGKEQAKRKKPSKSEAKGTVSKVTGKKITKIIGLGKKKPSTDEQTSSAEEDVPTCGYLNVLSNSRWRERWCRVKDSKLILHKDRADLKTHLVSIPLRGCEVIPGLDSKHPLTFRLLRNGQEVAVLEASSSEDMGRWIGILLAETGSSTDPGALHYDYIDVEMSANVIQTAKQTFCFMNRRAVSTSPYLGSLSNGYAHPSGTALHYDDVPCVNGSLKNKKPPASSNGVPVKGKAPSSQQKKVETAGGVKRTASNAEQYKYGKNRVEADAKRLQSKEEELLKRKEALRNRLAQLRKERKDLRAAIEVNAGRKTQAALEDKLKRLEEECKQREAERVSLELELTEVKESLKKALAGGVTLGLAIEPRSGTSSPQSPVFRHRTLENSPISSCDTSDAEGPLPVNSAAVLKKSQPSSGSSPCRGHVLQKAKEWELKNGT.

M1 carries the N-acetylmethionine modification. Positions 56-90 (NNLPAPPQMPLPEIPQPWLPPDSGPPPLPTSSLPE) are disordered. The span at 59 to 84 (PAPPQMPLPEIPQPWLPPDSGPPPLP) shows a compositional bias: pro residues. The short motif at 70 to 73 (PQPW) is the SH3-binding element. Positions 93-96 (YEEA) match the SH2-binding 1 motif. Residues 118 to 139 (SSSYESYDEEEEDGKGKKTRHQ) form a disordered region. A PH 1 domain is found at 152–248 (DAKICAFLLR…WLKVIKEAYS (97 aa)). The tract at residues 252–318 (GPVDPECSPP…SKSEAKGTVS (67 aa)) is disordered. Residues 271-284 (AELEKKLSSERPSS) are compositionally biased toward basic and acidic residues. Phosphoserine occurs at positions 283 and 284. The PH 2 domain occupies 348–442 (DVPTCGYLNV…WIGILLAETG (95 aa)). Residues 452–457 (YDYIDV) carry the SH2-binding 2 motif. Residues 513-544 (KNKKPPASSNGVPVKGKAPSSQQKKVETAGGV) are disordered. S549 is modified (phosphoserine). Residues 558 to 649 (KNRVEADAKR…VKESLKKALA (92 aa)) are a coiled coil. Residues 595-638 (DLRAAIEVNAGRKTQAALEDKLKRLEEECKQREAERVSLELELT) form an interaction with F-actin region. The tract at residues 658–731 (IEPRSGTSSP…AKEWELKNGT (74 aa)) is disordered. S665, S666, and S669 each carry phosphoserine. Residue T676 is modified to Phosphothreonine. A compositionally biased stretch (polar residues) spans 678-687 (ENSPISSCDT). S680 and S688 each carry phosphoserine. Positions 721–731 (KAKEWELKNGT) are enriched in basic and acidic residues.

In terms of assembly, monomer and homomultimer. Interacts via its C-terminus with F-actin; probably involving AFAP1 multimers. Interacts with activated SRC SH3-SH2 domains. Interacts via its PH 1 domain with PRKCA, PRKCB and PRKCI. Phosphorylated on tyrosine residues by SRC.

It localises to the cytoplasm. The protein resides in the cytoskeleton. It is found in the stress fiber. Functionally, can cross-link actin filaments into both network and bundle structures. May modulate changes in actin filament integrity and induce lamellipodia formation. May function as an adapter molecule that links other proteins, such as SRC and PKC to the actin cytoskeleton. The chain is Actin filament-associated protein 1 (Afap1) from Mus musculus (Mouse).